We begin with the raw amino-acid sequence, 123 residues long: MARISGIDLPKEKRVEIGLTYIYGIGLPTSQEILKATGVNPDTRVKDLSEEEVNAIRDYVNKNVKVEGDLRREIKLNIKRLVEIGSYRGIRHRRNLPVRGQKTKTNARTRKGPKRAIGGKKKK.

A disordered region spans residues R93–K123.

It belongs to the universal ribosomal protein uS13 family. In terms of assembly, part of the 30S ribosomal subunit. Forms a loose heterodimer with protein S19. Forms two bridges to the 50S subunit in the 70S ribosome.

Its function is as follows. Located at the top of the head of the 30S subunit, it contacts several helices of the 16S rRNA. In the 70S ribosome it contacts the 23S rRNA (bridge B1a) and protein L5 of the 50S subunit (bridge B1b), connecting the 2 subunits; these bridges are implicated in subunit movement. Contacts the tRNAs in the A and P-sites. The chain is Small ribosomal subunit protein uS13 from Clostridium botulinum (strain Kyoto / Type A2).